The sequence spans 156 residues: 3-hydroxyacyl-[acyl-carrier-protein] dehydratase FabZ (156 aa).

The active site involves histidine 57.

The protein belongs to the thioester dehydratase family. FabZ subfamily.

Its subcellular location is the cytoplasm. The enzyme catalyses a (3R)-hydroxyacyl-[ACP] = a (2E)-enoyl-[ACP] + H2O. Its function is as follows. Involved in unsaturated fatty acids biosynthesis. Catalyzes the dehydration of short chain beta-hydroxyacyl-ACPs and long chain saturated and unsaturated beta-hydroxyacyl-ACPs. The polypeptide is 3-hydroxyacyl-[acyl-carrier-protein] dehydratase FabZ (Anaeromyxobacter dehalogenans (strain 2CP-1 / ATCC BAA-258)).